The following is a 189-amino-acid chain: Peptidyl-tRNA hydrolase (189 aa).

Phe-15 serves as a coordination point for tRNA. His-20 functions as the Proton acceptor in the catalytic mechanism. The tRNA site is built by Tyr-65, Asn-67, and Asn-113.

Belongs to the PTH family. As to quaternary structure, monomer.

It localises to the cytoplasm. The enzyme catalyses an N-acyl-L-alpha-aminoacyl-tRNA + H2O = an N-acyl-L-amino acid + a tRNA + H(+). Hydrolyzes ribosome-free peptidyl-tRNAs (with 1 or more amino acids incorporated), which drop off the ribosome during protein synthesis, or as a result of ribosome stalling. Its function is as follows. Catalyzes the release of premature peptidyl moieties from peptidyl-tRNA molecules trapped in stalled 50S ribosomal subunits, and thus maintains levels of free tRNAs and 50S ribosomes. The chain is Peptidyl-tRNA hydrolase from Phytoplasma australiense.